A 194-amino-acid polypeptide reads, in one-letter code: E3 ubiquitin-protein ligase RNF185 (194 aa).

The span at 1–27 (MASAAASESSSSSSSSSAGAANGQSAG) shows a compositional bias: low complexity. The disordered stretch occupies residues 1–32 (MASAAASESSSSSSSSSAGAANGQSAGESGGG). The required for ubiquitin ligase activity and protection against ER stress-induced cell death stretch occupies residues 31 to 82 (GGGAQDSTFECNICLDTSKDAVISLCGHLFCWPCLHQWLETRPNRQVCPVCK). The segment at 41-82 (CNICLDTSKDAVISLCGHLFCWPCLHQWLETRPNRQVCPVCK) adopts an RING-type zinc-finger fold. The segment at 92–126 (PLYGRGSTGQQDPREKTPPRPQGQRPEPENRGGFQ) is disordered. 2 helical membrane passes run 133–153 (GGFQMSFGIGAFPFGIFATAF) and 174–194 (QFLSRLFLFVALLIMFWLLIA).

The protein resides in the mitochondrion outer membrane. Its subcellular location is the endoplasmic reticulum membrane. The catalysed reaction is S-ubiquitinyl-[E2 ubiquitin-conjugating enzyme]-L-cysteine + [acceptor protein]-L-lysine = [E2 ubiquitin-conjugating enzyme]-L-cysteine + N(6)-ubiquitinyl-[acceptor protein]-L-lysine.. It participates in protein modification; protein ubiquitination. In terms of biological role, E3 ubiquitin-protein ligase that regulates selective mitochondrial autophagy by mediating 'Lys-63'-linked polyubiquitination. Acts in the endoplasmic reticulum (ER)-associated degradation (ERAD) pathway, which targets misfolded proteins that accumulate in the endoplasmic reticulum (ER) for ubiquitination and subsequent proteasome-mediated degradation. Protects cells from ER stress-induced apoptosis. Responsible for the cotranslational ubiquitination and degradation of CFTR in the ERAD pathway. Also acts as a regulator of the innate antiviral response by catalyzing 'Lys-27'-linked polyubiquitination of CGAS, thereby promoting CGAS cyclic GMP-AMP synthase activity. Preferentially associates with the E2 enzymes UBE2J1 and UBE2J2. In Danio rerio (Zebrafish), this protein is E3 ubiquitin-protein ligase RNF185 (rnf185).